We begin with the raw amino-acid sequence, 1274 residues long: MSGSSAAPGPGSGSSPAACRFAHYFVLCGIDADSGLEPDELAGENFDQSPLRRTFKSKVLAHYPQNIEWNPFDQDAVNMLCMPKGLSFRTQADNKEPQFHSFIITREDGSRTYGFVLTFYEEVTSKQICTAMQTLYQMHNAEQYSSVYASSSCSMDSLASSIDEGDATSLLKLQRYNSYDINRDTLYVSKSICLITPLPFMQACKKFLFQLHKAVTSQQPPPLPLESYIHNILYEVPLPPPGRSLKFYGVYEPVICQRPGPNELPLSDYPLREACELLGLENLVQVFTCVLLEMQTLLYSQDYQRLMTVAEGITTLLFPFQWQHVYVPILPASLLHFLDAPVPYLMGLQSKEGTDRSKLELPQEANLCFVDIDNHFIELPEEFPQFPNKVDFIQELSEVLLQFGIPPEGSLHSSESATKLKNMVLKDLANDKKNGNVPNNSVSVYELLKGSETIARLQALAKRTGVTMEKIDLPASLSEKEKDLKLQCEEADLRDSQLNVQLREVFANRFTQMFADYEAFVIQTAQDMESWLTNREQMQNFDKASFLSDQPEPYLPFLSRFIETQMFATFIDNKIMSQWEEKDPLLRVFDSRIEKIRLYNVRAPTLRTSIYQKCSSLKEAAQSIEQRLMKMDHTAIHPHLLDMKIGQGKYEQGFFPKLQSDVLATGPANNNRWVSRSATAQRRKERLRQSSEHIGLDSDLREKYMQEARSLGKNLRQPKLSDLSPAVIAQTNWKFVEGLLKECRMKTKRMLVEKMGHEAVELGHGEANITGLEENTLIASLCDLLERIWSHGLLVKQGKSALWSHLLQFQDREEKQEHLTDSPVALGPERRKSDSGVMLPTLRVSLIQDMRHIQNMTEIKTDVGRARAWIRLSLEKKLLSQHLKQLLSNQPLTKKLYKRYAFLRCEEEREQFLYHLLSLNAVDYFCFTSVFTTIMIPYRSVIIPIKKLSNAIITSNPWICVSGELGDTGVMQIPKNLLEMTFECQNLGKLTTVQIGHDNSGLLAKWLVDCVMVRNEITGHTYRFPCGRWLGKGVDDGSLERILIGELMTSASDEDLGKQCRTPPQQKSPTTTRRLSITSLTGKPAKPNAGQIQEGIGEAVNNIVKHFHKPEKERGSLTVLLCGENGLVAALEQVFHHGFKSARIFHKNVFIWDFVEKAVAYFETTDQILDNEGDVLIQKPSSKTFCHYVNAINTAPRNIGKDGKFQILVCLGTRDHLLPQWIPLLAECPAITRMYEENALLRDHMTVNSLIRILQTIQDFTIVLEGSLIKGVDV.

Residue S2 is modified to N-acetylserine. Positions 39 to 244 constitute a uDENN domain; the sequence is DELAGENFDQ…EVPLPPPGRS (206 aa). A phosphoserine mark is found at S49 and S178. Residues 263–399 form the cDENN domain; it reads ELPLSDYPLR…VDFIQELSEV (137 aa). In terms of domain architecture, dDENN spans 401–581; sequence LQFGIPPEGS…DNKIMSQWEE (181 aa). Positions 772 to 932 constitute an RUN 1 domain; that stretch reads LEENTLIASL…DYFCFTSVFT (161 aa). Position 822 is a phosphoserine (S822). The helical transmembrane segment at 916–936 threads the bilayer; the sequence is LLSLNAVDYFCFTSVFTTIMI. Residues 936-1044 enclose the PLAT domain; that stretch reads IPYRSVIIPI…DDGSLERILI (109 aa). Phosphothreonine is present on T1062. A phosphoserine mark is found at S1068, S1076, and S1079. Residues 1118 to 1267 enclose the RUN 2 domain; it reads TVLLCGENGL…QDFTIVLEGS (150 aa).

The protein belongs to the RAB6IP1 family.

It is found in the membrane. In terms of biological role, guanine nucleotide exchange factor (GEF) which may activate RAB39A and/or RAB39B. Promotes the exchange of GDP to GTP, converting inactive GDP-bound Rab proteins into their active GTP-bound form. The sequence is that of DENN domain-containing protein 5B (Dennd5b) from Mus musculus (Mouse).